Consider the following 235-residue polypeptide: 7-cyano-7-deazaguanine synthase (235 aa).

Residue 12–22 (FSGGQDSTTCL) coordinates ATP. Residues cysteine 200, cysteine 215, cysteine 218, and cysteine 221 each contribute to the Zn(2+) site.

Belongs to the QueC family. Requires Zn(2+) as cofactor.

The catalysed reaction is 7-carboxy-7-deazaguanine + NH4(+) + ATP = 7-cyano-7-deazaguanine + ADP + phosphate + H2O + H(+). It functions in the pathway purine metabolism; 7-cyano-7-deazaguanine biosynthesis. Its function is as follows. Catalyzes the ATP-dependent conversion of 7-carboxy-7-deazaguanine (CDG) to 7-cyano-7-deazaguanine (preQ(0)). This chain is 7-cyano-7-deazaguanine synthase, found in Leptothrix cholodnii (strain ATCC 51168 / LMG 8142 / SP-6) (Leptothrix discophora (strain SP-6)).